Here is a 114-residue protein sequence, read N- to C-terminus: Phosphoribosyl-AMP cyclohydrolase (114 aa).

Mg(2+) is bound at residue D76. Residue C77 coordinates Zn(2+). Mg(2+) is bound by residues D78 and D80. Residues C93 and C100 each contribute to the Zn(2+) site.

The protein belongs to the PRA-CH family. As to quaternary structure, homodimer. Mg(2+) is required as a cofactor. Zn(2+) serves as cofactor.

The protein localises to the cytoplasm. The enzyme catalyses 1-(5-phospho-beta-D-ribosyl)-5'-AMP + H2O = 1-(5-phospho-beta-D-ribosyl)-5-[(5-phospho-beta-D-ribosylamino)methylideneamino]imidazole-4-carboxamide. It functions in the pathway amino-acid biosynthesis; L-histidine biosynthesis; L-histidine from 5-phospho-alpha-D-ribose 1-diphosphate: step 3/9. In terms of biological role, catalyzes the hydrolysis of the adenine ring of phosphoribosyl-AMP. The sequence is that of Phosphoribosyl-AMP cyclohydrolase from Streptococcus sanguinis (strain SK36).